The following is a 289-amino-acid chain: 1D-myo-inositol 2-acetamido-2-deoxy-alpha-D-glucopyranoside deacetylase 1 (289 aa).

Residues histidine 4, aspartate 7, and histidine 140 each coordinate Zn(2+).

This sequence belongs to the MshB deacetylase family. It depends on Zn(2+) as a cofactor.

The enzyme catalyses 1D-myo-inositol 2-acetamido-2-deoxy-alpha-D-glucopyranoside + H2O = 1D-myo-inositol 2-amino-2-deoxy-alpha-D-glucopyranoside + acetate. In terms of biological role, catalyzes the deacetylation of 1D-myo-inositol 2-acetamido-2-deoxy-alpha-D-glucopyranoside (GlcNAc-Ins) in the mycothiol biosynthesis pathway. The protein is 1D-myo-inositol 2-acetamido-2-deoxy-alpha-D-glucopyranoside deacetylase 1 of Frankia alni (strain DSM 45986 / CECT 9034 / ACN14a).